Here is a 158-residue protein sequence, read N- to C-terminus: MSETMQSLDQLSALKTTQPDAPTYTKKVDKQGRAYATGKRKDAVARVWIKPGAGKVTVNAREVEVYFARPVLRMMIQQPLVAAARAGQYDVICTVAGGGLSGQAGAVRHGISKALTNFEPELRGVLKKGGFLTRDSRVVERKKYGKAKARRSFQFSKR.

Polar residues predominate over residues 1–20; sequence MSETMQSLDQLSALKTTQPD. The segment at 1 to 29 is disordered; that stretch reads MSETMQSLDQLSALKTTQPDAPTYTKKVD.

The protein belongs to the universal ribosomal protein uS9 family.

The chain is Small ribosomal subunit protein uS9 from Rhodopseudomonas palustris (strain BisB5).